Reading from the N-terminus, the 295-residue chain is Phosphatidylglycerol--prolipoprotein diacylglyceryl transferase (295 aa).

Helical transmembrane passes span 28 to 48 (WYAL…VLAT), 69 to 89 (LLTW…VLFY), 101 to 121 (ILMV…VVIA), and 131 to 151 (IPKL…LLLG). Residue Arg-152 participates in a 1,2-diacyl-sn-glycero-3-phospho-(1'-sn-glycerol) binding. The next 3 membrane-spanning stretches (helical) occupy residues 195 to 215 (QLYE…WLVW), 224 to 244 (GLIT…VEFF), and 268 to 288 (GLTM…WFVL).

Belongs to the Lgt family.

The protein localises to the cell inner membrane. It carries out the reaction L-cysteinyl-[prolipoprotein] + a 1,2-diacyl-sn-glycero-3-phospho-(1'-sn-glycerol) = an S-1,2-diacyl-sn-glyceryl-L-cysteinyl-[prolipoprotein] + sn-glycerol 1-phosphate + H(+). Its pathway is protein modification; lipoprotein biosynthesis (diacylglyceryl transfer). Catalyzes the transfer of the diacylglyceryl group from phosphatidylglycerol to the sulfhydryl group of the N-terminal cysteine of a prolipoprotein, the first step in the formation of mature lipoproteins. The chain is Phosphatidylglycerol--prolipoprotein diacylglyceryl transferase from Ruegeria pomeroyi (strain ATCC 700808 / DSM 15171 / DSS-3) (Silicibacter pomeroyi).